The primary structure comprises 70 residues: Putative membrane protein insertion efficiency factor (70 aa).

Belongs to the UPF0161 family.

It localises to the cell membrane. Its function is as follows. Could be involved in insertion of integral membrane proteins into the membrane. The polypeptide is Putative membrane protein insertion efficiency factor (Lachnoclostridium phytofermentans (strain ATCC 700394 / DSM 18823 / ISDg) (Clostridium phytofermentans)).